The primary structure comprises 262 residues: 14-3-3-like protein A (262 aa).

Residues aspartate 240–serine 262 form a disordered region. The span at aspartate 247–serine 262 shows a compositional bias: basic and acidic residues.

Belongs to the 14-3-3 family.

The protein is 14-3-3-like protein A of Hordeum vulgare (Barley).